Consider the following 534-residue polypeptide: MSLRPSERAEVRRSRYKVAVDADEGRRRREDNMVEIRKSRREESLLKKRRDGLPAAAAAAAAASPLLAHSSALQQKLEGLPAMVQAVQSDDSAVQLEATTQFRKLLSIERSPPIEEVINTGVVPRFIAFLQREDYPQLQFEAAWALTNIASGTSDNTKVVVESGAVPIFVKLLSSPSEDVREQAVWALGNVAGDSPKCRDLVLASGGLYPLLQQLNEHAKLSMLRNATWTLSNFCRGKPQPNFEQVKPALSALQRLIHSQDEEVLTDACWALSYLSDGTNDKIQAVIESGVFPRLVELLMHPSASVLIPALRTVGNIVTGDDMQTQCVIDHQALPCLLNLLTNNHKKSIKKEACWTISNITAGNREQIQAVINANIIAPLVHLLQTAEFDIKKEAAWAISNATSGGTHDQIKYLVAQGCIKPLCDLLVCPDPRIVTVCLEGLENILKVGEAEKNLGAGDVNSYAQMIDDAEGLEKIENLQSHDNTEIYEKAVKMLESYWLEEEDDAMPSGDNAQNGFNFGNQQPNVPSGGFNFG.

Residues 1–58 enclose the IBB domain; sequence MSLRPSERAEVRRSRYKVAVDADEGRRRREDNMVEIRKSRREESLLKKRRDGLPAAAA. ARM repeat units follow at residues 111 to 151, 154 to 193, 196 to 236, 238 to 277, 280 to 319, 322 to 362, 365 to 404, and 408 to 447; these read SPPI…NIAS, SDNT…NVAG, PKCR…NFCR, KPQP…YLSD, NDKI…NIVT, DMQT…NITA, REQI…NATS, and HDQI…NILK. The tract at residues 505 to 534 is disordered; the sequence is DAMPSGDNAQNGFNFGNQQPNVPSGGFNFG. A compositionally biased stretch (low complexity) spans 514–523; it reads QNGFNFGNQQ.

This sequence belongs to the importin alpha family. In terms of assembly, forms a complex with importin subunit beta-1. The whole complex, most stable and composed of importin alpha and importin beta, is referred to as PTAC or pore targeting complex. As to expression, highly expressed in root and weakly in callus, etiolated leaf and green leaf.

It localises to the cytoplasm. The protein localises to the perinuclear region. Functions in nuclear protein import. Binds specifically and directly to substrates containing either a simple or bipartite NLS motif. Promotes docking of import substrates to the nuclear envelope. In conjunction with importin beta-1, mediates the nuclear envelope docking, and the subsequent translocation into the nucleus of the constitutive morphogenetic 1 (COP1) protein containing bipartite NLS motif. The protein is Importin subunit alpha-1b of Oryza sativa subsp. japonica (Rice).